Consider the following 132-residue polypeptide: MWNEFKKFAFKGNVVDLAVGVVIGAAFGKIVSSLVKDIITPLLGMVLGGVNFTDLHFGYGKSAVMYGNFIQTIFDFLIIAASIFMFIKVFNKLTSKKEDEKEEEIPEPTKEEVLLGEIRDLLKQQNSSKDRA.

The next 3 membrane-spanning stretches (helical) occupy residues 14–34 (VVDL…VSSL), 38–58 (IITP…LHFG), and 67–87 (GNFI…FMFI).

It belongs to the MscL family. Homopentamer.

The protein resides in the cell membrane. Functionally, channel that opens in response to stretch forces in the membrane lipid bilayer. May participate in the regulation of osmotic pressure changes within the cell. The polypeptide is Large-conductance mechanosensitive channel (Bacillus cereus (strain G9842)).